Reading from the N-terminus, the 661-residue chain is Pseudouridylate synthase 7 homolog (661 aa).

M1 is subject to N-acetylmethionine. The segment at 1–97 (MEMTEMTGVS…GLSEECEEEE (97 aa)) is disordered. A Phosphoserine modification is found at S10. Positions 36-52 (SECSLTKGQDGLQNDFL) are enriched in polar residues. Residues 77-97 (QLEDEEEEEEDGLSEECEEEE) are compositionally biased toward acidic residues. S127 bears the Phosphoserine mark. D294 serves as the catalytic Nucleophile. Positions 370–580 (GFINYYGMQR…SGAYRKIIIR (211 aa)) constitute a TRUD domain. Position 610 is a phosphothreonine (T610).

The protein belongs to the pseudouridine synthase TruD family. In terms of assembly, interacts with SIRT1.

Its subcellular location is the nucleus. The enzyme catalyses a uridine in tRNA = a pseudouridine in tRNA. It carries out the reaction uridine(13) in tRNA = pseudouridine(13) in tRNA. It catalyses the reaction a uridine in mRNA = a pseudouridine in mRNA. Its function is as follows. Pseudouridylate synthase that catalyzes pseudouridylation of RNAs. Acts as a regulator of protein synthesis in embryonic stem cells by mediating pseudouridylation of RNA fragments derived from tRNAs (tRFs): pseudouridylated tRFs inhibit translation by targeting the translation initiation complex. Also catalyzes pseudouridylation of mRNAs: mediates pseudouridylation of mRNAs with the consensus sequence 5'-UGUAG-3'. Acts as a regulator of pre-mRNA splicing by mediating pseudouridylation of pre-mRNAs at locations associated with alternatively spliced regions. Pseudouridylation of pre-mRNAs near splice sites directly regulates mRNA splicing and mRNA 3'-end processing. In addition to mRNAs and tRNAs, binds other types of RNAs, such as snRNAs, Y RNAs and vault RNAs, suggesting that it can catalyze pseudouridylation of many RNA types. The sequence is that of Pseudouridylate synthase 7 homolog from Homo sapiens (Human).